The chain runs to 434 residues: Enolase (434 aa).

Position 163 (Gln163) interacts with (2R)-2-phosphoglycerate. Glu205 acts as the Proton donor in catalysis. Mg(2+) is bound by residues Asp242, Glu291, and Asp318. The (2R)-2-phosphoglycerate site is built by Lys343, Arg372, Ser373, and Lys394. Lys343 functions as the Proton acceptor in the catalytic mechanism.

The protein belongs to the enolase family. The cofactor is Mg(2+).

The protein localises to the cytoplasm. Its subcellular location is the secreted. It is found in the cell surface. The catalysed reaction is (2R)-2-phosphoglycerate = phosphoenolpyruvate + H2O. Its pathway is carbohydrate degradation; glycolysis; pyruvate from D-glyceraldehyde 3-phosphate: step 4/5. Functionally, catalyzes the reversible conversion of 2-phosphoglycerate (2-PG) into phosphoenolpyruvate (PEP). It is essential for the degradation of carbohydrates via glycolysis. In Streptococcus sanguinis (strain SK36), this protein is Enolase.